The sequence spans 318 residues: Bis(5'-nucleosyl)-tetraphosphatase, symmetrical (318 aa).

The interval 269–318 (PGREVTGPAPVARAPRRPRERLGRQRSRGNRGNAGNTAVPAKPPVDTPQD) is disordered. Positions 282–297 (APRRPRERLGRQRSRG) are enriched in basic residues. Pro residues predominate over residues 309–318 (AKPPVDTPQD).

This sequence belongs to the Ap4A hydrolase family.

It carries out the reaction P(1),P(4)-bis(5'-adenosyl) tetraphosphate + H2O = 2 ADP + 2 H(+). In terms of biological role, hydrolyzes diadenosine 5',5'''-P1,P4-tetraphosphate to yield ADP. In Xanthomonas oryzae pv. oryzae (strain PXO99A), this protein is Bis(5'-nucleosyl)-tetraphosphatase, symmetrical.